Here is a 261-residue protein sequence, read N- to C-terminus: Phosphate import ATP-binding protein PstB 1 (261 aa).

Residues 8–256 form the ABC transporter domain; the sequence is IKVNNLSFYY…PHDSRTREYV (249 aa). ATP is bound at residue 40–47; it reads GPSGCGKS.

The protein belongs to the ABC transporter superfamily. Phosphate importer (TC 3.A.1.7) family. The complex is composed of two ATP-binding proteins (PstB), two transmembrane proteins (PstC and PstA) and a solute-binding protein (PstS).

It localises to the cell inner membrane. The enzyme catalyses phosphate(out) + ATP + H2O = ADP + 2 phosphate(in) + H(+). Part of the ABC transporter complex PstSACB involved in phosphate import. Responsible for energy coupling to the transport system. This Nostoc sp. (strain PCC 7120 / SAG 25.82 / UTEX 2576) protein is Phosphate import ATP-binding protein PstB 1.